The primary structure comprises 416 residues: ORC1-type DNA replication protein 9 (416 aa).

ATP-binding positions include 79-83 (SGKSL), tyrosine 226, and arginine 238.

It belongs to the CDC6/cdc18 family.

In terms of biological role, involved in regulation of DNA replication. The sequence is that of ORC1-type DNA replication protein 9 (cdc6i) from Haloarcula marismortui (strain ATCC 43049 / DSM 3752 / JCM 8966 / VKM B-1809) (Halobacterium marismortui).